We begin with the raw amino-acid sequence, 132 residues long: Small ribosomal subunit protein uS8 (132 aa).

Belongs to the universal ribosomal protein uS8 family. As to quaternary structure, part of the 30S ribosomal subunit. Contacts proteins S5 and S12.

Its function is as follows. One of the primary rRNA binding proteins, it binds directly to 16S rRNA central domain where it helps coordinate assembly of the platform of the 30S subunit. This is Small ribosomal subunit protein uS8 from Ureaplasma urealyticum serovar 10 (strain ATCC 33699 / Western).